We begin with the raw amino-acid sequence, 853 residues long: DNA mismatch repair protein MutS (853 aa).

614–621 is an ATP binding site; the sequence is GPNMGGKS.

It belongs to the DNA mismatch repair MutS family.

In terms of biological role, this protein is involved in the repair of mismatches in DNA. It is possible that it carries out the mismatch recognition step. This protein has a weak ATPase activity. In Escherichia coli O7:K1 (strain IAI39 / ExPEC), this protein is DNA mismatch repair protein MutS.